We begin with the raw amino-acid sequence, 170 residues long: Ribulose bisphosphate carboxylase small subunit, chloroplastic (170 aa).

2 consecutive transit peptides (chloroplast) follow at residues 1–46 (MAPT…GRIR) and 1–47 (MAPT…RIRC).

The protein belongs to the RuBisCO small chain family. As to quaternary structure, heterohexadecamer of 8 large and 8 small subunits.

It localises to the plastid. The protein resides in the chloroplast. Functionally, ruBisCO catalyzes two reactions: the carboxylation of D-ribulose 1,5-bisphosphate, the primary event in carbon dioxide fixation, as well as the oxidative fragmentation of the pentose substrate. Both reactions occur simultaneously and in competition at the same active site. Although the small subunit is not catalytic it is essential for maximal activity. In Zea mays (Maize), this protein is Ribulose bisphosphate carboxylase small subunit, chloroplastic.